The following is a 400-amino-acid chain: Octopine dehydrogenase (400 aa).

Residues 10–13 and 35–38 contribute to the NADH site; these read GGNG and FADE. Positions 118 and 143 each coordinate pyruvate. Q118 contacts substrate. C148 lines the NAD(+) pocket. L-arginine is bound at residue M206. Residue H212 coordinates pyruvate. H212 is a catalytic residue. R324 contacts NAD(+).

It belongs to the lysopine/nopaline/octopine/opine/vitopine dehydrogenases family.

The enzyme catalyses D-octopine + NAD(+) + H2O = L-arginine + pyruvate + NADH + H(+). In terms of biological role, catalyzes the reverse reaction of octopine dehydrogenation. Acts on L-arginine in preference to other substrates. In Mizuhopecten yessoensis (Japanese scallop), this protein is Octopine dehydrogenase.